The sequence spans 101 residues: Small ribosomal subunit protein uS10 (101 aa).

This sequence belongs to the universal ribosomal protein uS10 family. Part of the 30S ribosomal subunit.

In terms of biological role, involved in the binding of tRNA to the ribosomes. The polypeptide is Small ribosomal subunit protein uS10 (Flavobacterium psychrophilum (strain ATCC 49511 / DSM 21280 / CIP 103535 / JIP02/86)).